The primary structure comprises 113 residues: U11-theraphotoxin-Hhn1a (113 aa).

The signal sequence occupies residues 1-21 (MNTVRVTFLLVFVLAVSLGQA). The propeptide occupies 22 to 74 (DKDENRMEMQEKTEQGKGYLDFAENLLPQKLEELEAKLLEEDSEESRNSRQKR). The segment covering 59–69 (LLEEDSEESRN) has biased composition (basic and acidic residues). Residues 59-83 (LLEEDSEESRNSRQKRCIGEGVPCD) form a disordered region. 3 disulfide bridges follow: Cys75–Cys90, Cys82–Cys95, and Cys89–Cys110.

Belongs to the neurotoxin 14 (magi-1) family. 01 (HNTX-16) subfamily. In terms of tissue distribution, expressed by the venom gland.

The protein resides in the secreted. In terms of biological role, probable ion channel inhibitor. In Cyriopagopus hainanus (Chinese bird spider), this protein is U11-theraphotoxin-Hhn1a.